The sequence spans 201 residues: Molybdenum cofactor guanylyltransferase (201 aa).

Residues 14 to 16 (LAG), K31, and D104 contribute to the GTP site. Residue D104 participates in Mg(2+) binding.

Belongs to the MobA family. As to quaternary structure, monomer. Requires Mg(2+) as cofactor.

Its subcellular location is the cytoplasm. The enzyme catalyses Mo-molybdopterin + GTP + H(+) = Mo-molybdopterin guanine dinucleotide + diphosphate. Its function is as follows. Transfers a GMP moiety from GTP to Mo-molybdopterin (Mo-MPT) cofactor (Moco or molybdenum cofactor) to form Mo-molybdopterin guanine dinucleotide (Mo-MGD) cofactor. This Helicobacter pylori (strain ATCC 700392 / 26695) (Campylobacter pylori) protein is Molybdenum cofactor guanylyltransferase.